The sequence spans 359 residues: 3-dehydroquinate synthase (359 aa).

NAD(+) contacts are provided by residues 70–75, 105–109, 129–130, lysine 142, lysine 151, and 169–172; these read DGEQYK, GVIGD, TT, and FYKT. The Zn(2+) site is built by glutamate 184, histidine 247, and histidine 264.

Belongs to the sugar phosphate cyclases superfamily. Dehydroquinate synthase family. Co(2+) is required as a cofactor. It depends on Zn(2+) as a cofactor. Requires NAD(+) as cofactor.

The protein resides in the cytoplasm. It carries out the reaction 7-phospho-2-dehydro-3-deoxy-D-arabino-heptonate = 3-dehydroquinate + phosphate. Its pathway is metabolic intermediate biosynthesis; chorismate biosynthesis; chorismate from D-erythrose 4-phosphate and phosphoenolpyruvate: step 2/7. In terms of biological role, catalyzes the conversion of 3-deoxy-D-arabino-heptulosonate 7-phosphate (DAHP) to dehydroquinate (DHQ). This chain is 3-dehydroquinate synthase, found in Francisella tularensis subsp. holarctica (strain OSU18).